A 192-amino-acid polypeptide reads, in one-letter code: Large ribosomal subunit protein uL3 (192 aa).

The protein belongs to the universal ribosomal protein uL3 family. As to quaternary structure, part of the 50S ribosomal subunit. Forms a cluster with proteins L14 and L19.

Its function is as follows. One of the primary rRNA binding proteins, it binds directly near the 3'-end of the 23S rRNA, where it nucleates assembly of the 50S subunit. The chain is Large ribosomal subunit protein uL3 (rplC) from Helicobacter hepaticus (strain ATCC 51449 / 3B1).